The sequence spans 80 residues: UPF0057 membrane protein ZK632.10 (80 aa).

2 helical membrane-spanning segments follow: residues 4 to 24 (ILLA…DVGC) and 32 to 52 (ILLT…IILC).

It belongs to the UPF0057 (PMP3) family.

It localises to the membrane. This chain is UPF0057 membrane protein ZK632.10, found in Caenorhabditis elegans.